A 251-amino-acid polypeptide reads, in one-letter code: Transcriptional regulator CBF1 (251 aa).

Residues 1-169 form a disordered region; sequence MVKSHKRTLE…VERKRRESIN (169 aa). Residues 7 to 28 are compositionally biased toward basic and acidic residues; it reads RTLEKDEEHQEKKKANKISKDD. Positions 40-56 are enriched in low complexity; that stretch reads ASDSAHTDTATAAVAAV. A compositionally biased stretch (polar residues) spans 67-76; that stretch reads TESSTNQTSA. The span at 77–105 shows a compositional bias: basic and acidic residues; the sequence is LDKDDKETKDNLNPREETQSSHQEIDIPK. Positions 107–116 are enriched in polar residues; it reads QLTNQQNLAD. Positions 117–126 are enriched in low complexity; it reads QHQQYQYHQQ. Positions 127–140 are enriched in polar residues; that stretch reads LAQTNFKTEPTNSA. A compositionally biased stretch (basic and acidic residues) spans 144–167; the sequence is HGSEEWHRQRRENHKEVERKRRES. The bHLH domain occupies 152-200; that stretch reads QRRENHKEVERKRRESINTGIRELARLIPTTDTNKAQILQRAVEYIKRL. The stretch at 190 to 223 forms a coiled coil; that stretch reads LQRAVEYIKRLKENENNNIEKWTLEKLLTEQAVS.

The protein localises to the nucleus. Functionally, transcription factor that binds ribosomal protein gene promoters and rDNA locus with TBF1. Necessary for the expression of genes involved in assimilation of inorganic sulfate. Also required for the expression of respiratory genes and glycolytic genes. Does not bind to centromeres and is not necessary for efficient chromosome segregationas as does S.cerevisiae CBF1. The chain is Transcriptional regulator CBF1 (CBF1) from Candida albicans (strain SC5314 / ATCC MYA-2876) (Yeast).